Reading from the N-terminus, the 140-residue chain is Nucleoside diphosphate kinase (140 aa).

ATP-binding residues include Lys-11, Phe-59, Arg-87, Thr-93, Arg-104, and Asn-114. His-117 functions as the Pros-phosphohistidine intermediate in the catalytic mechanism.

It belongs to the NDK family. As to quaternary structure, homotetramer. Requires Mg(2+) as cofactor.

Its subcellular location is the cytoplasm. The enzyme catalyses a 2'-deoxyribonucleoside 5'-diphosphate + ATP = a 2'-deoxyribonucleoside 5'-triphosphate + ADP. It carries out the reaction a ribonucleoside 5'-diphosphate + ATP = a ribonucleoside 5'-triphosphate + ADP. Its function is as follows. Major role in the synthesis of nucleoside triphosphates other than ATP. The ATP gamma phosphate is transferred to the NDP beta phosphate via a ping-pong mechanism, using a phosphorylated active-site intermediate. The protein is Nucleoside diphosphate kinase of Methylobacterium nodulans (strain LMG 21967 / CNCM I-2342 / ORS 2060).